The following is a 472-amino-acid chain: Pyruvate kinase (472 aa).

Arg-33 provides a ligand contact to substrate. 3 residues coordinate K(+): Asn-35, Ser-37, and Asp-67. An ATP-binding site is contributed by 35–38 (NFSH). The ATP site is built by Arg-74 and Lys-155. Glu-220 contacts Mg(2+). Residues Gly-243, Asp-244, and Thr-276 each contribute to the substrate site. Asp-244 serves as a coordination point for Mg(2+).

The protein belongs to the pyruvate kinase family. In terms of assembly, homotetramer. Requires Mg(2+) as cofactor. The cofactor is K(+).

It catalyses the reaction pyruvate + ATP = phosphoenolpyruvate + ADP + H(+). It functions in the pathway carbohydrate degradation; glycolysis; pyruvate from D-glyceraldehyde 3-phosphate: step 5/5. This Mycobacterium tuberculosis (strain CDC 1551 / Oshkosh) protein is Pyruvate kinase (pyk).